A 359-amino-acid chain; its full sequence is Mitochondrial glutathione transporter SLC25A39 (359 aa).

At Met-1 to Gln-14 the chain is on the mitochondrial intermembrane side. Solcar repeat units follow at residues Ile-9–Phe-151, Ser-159–Trp-243, and Thr-253–Phe-347. A helical membrane pass occupies residues Met-15–Val-35. Residues Lys-36–Arg-121 are Mitochondrial matrix-facing. Positions 74, 78, 88, and 94 each coordinate [2Fe-2S] cluster. Residues Thr-122–Phe-142 traverse the membrane as a helical segment. Residues Thr-143–Pro-164 lie on the Mitochondrial intermembrane side of the membrane. Residues Met-165 to Val-185 traverse the membrane as a helical segment. Residues Arg-186–Ser-214 lie on the Mitochondrial matrix side of the membrane. Residues Leu-215–Phe-235 form a helical membrane-spanning segment. The Mitochondrial intermembrane portion of the chain corresponds to Asn-236–Val-255. Residues Gly-256–Phe-276 traverse the membrane as a helical segment. Over Asp-277–Arg-317 the chain is Mitochondrial matrix. A helical membrane pass occupies residues Gly-318–Ile-338. Residues Ser-339–Arg-359 are Mitochondrial intermembrane-facing.

It belongs to the mitochondrial carrier (TC 2.A.29) family. In terms of processing, cleaved and degraded by AFG3L2; degradation by AFG3L2 is regulated by the ability of SLC25A39 to bind iron-sulfur. In absence of mitochondrial glutathione, SLC25A39 binds iron-sulfur, preventing cleavage and degradation by AFG3L2. The presence of mitochondrial glutathione prevents iron-sulfur-binding to SLC25A39, promoting cleavage and degradation by AFG3L2. As to expression, abundant expression in bone marrow, spleen, testis and kidney.

Its subcellular location is the mitochondrion inner membrane. It carries out the reaction glutathione(in) = glutathione(out). The activity of SLC25A39 is regulated by levels of mitochondrial glutathione via its ability to bind [2Fe-2S] iron-sulfur cluster. Upon physiological levels of mitochondrial glutathione, glutathione prevents iron-sulfur-binding to SLC25A39 promoting cleavage and degradation by AFG3L2. Upon depletion of mitochondrial glutathione, SLC25A39 binds iron-sulfur, preventing cleavage and degradation by AFG3L2. Mitochondrial transporter required for glutathione import into mitochondria. Glutathione, which plays key roles in oxidative metabolism, is produced exclusively in the cytosol and is imported in many organelles. Mitochondrial glutathione is required for the activity and stability of proteins containing iron-sulfur clusters, as well as erythropoiesis. This Mus musculus (Mouse) protein is Mitochondrial glutathione transporter SLC25A39.